We begin with the raw amino-acid sequence, 1312 residues long: Rho GTPase-activating protein gacG (1312 aa).

Disordered stretches follow at residues 52–74 (VENN…KRSQ), 111–158 (SNNN…SSSD), 314–519 (ISSS…PRNF), 762–831 (NSIS…SSTG), 1185–1230 (NNNN…SSSV), and 1282–1312 (TGTS…IVEE). 2 stretches are compositionally biased toward low complexity: residues 53-67 (ENNN…NSEN) and 111-146 (SNNN…YSPR). Polar residues predominate over residues 147-158 (NNNNNFTESSSD). Composition is skewed to low complexity over residues 328-355 (TTAA…ANNS), 373-397 (HHSS…IGNS), and 414-436 (LNLT…NNGN). Over residues 437-449 (EVIQSSSSTSSPR) the composition is skewed to polar residues. A compositionally biased stretch (low complexity) spans 479–507 (SSTNSLNNSTSSLKSSNNNILQQQQQQQQ). 2 stretches are compositionally biased toward polar residues: residues 508–518 (HYDSAPTTPRN) and 763–776 (SIST…GNIA). Positions 792 to 816 (NNNNNNNNNNNNNNNNNNNNNNNNN) are enriched in low complexity. Positions 1030 to 1212 (SKIDPITGFN…HHNSHHHRDN (183 aa)) constitute a Rho-GAP domain. Basic residues predominate over residues 1196–1210 (HHHHHHHHHNSHHHR). Low complexity-rich tracts occupy residues 1213-1222 (NNNNSNNNSS) and 1282-1305 (TGTS…RSPS).

The protein resides in the cytoplasm. Its function is as follows. Rho GTPase-activating protein involved in the signal transduction pathway. In Dictyostelium discoideum (Social amoeba), this protein is Rho GTPase-activating protein gacG (gacG).